The primary structure comprises 380 residues: Flap endonuclease 1-A (380 aa).

Positions 1–105 (MGIKGLTKLL…EELAKRFSKR (105 aa)) are N-domain. Residue Asp34 coordinates Mg(2+). DNA is bound at residue Arg71. Asp87, Glu159, Glu161, Asp180, and Asp182 together coordinate Mg(2+). The interval 123–254 (AVEKLSKRTV…QTALKLIRQH (132 aa)) is I-domain. Glu159 is a DNA binding site. Positions 232 and 234 each coordinate DNA. Asp234 provides a ligand contact to Mg(2+). The interaction with PCNA stretch occupies residues 336–344 (SQGRLESFF). Residues 351–380 (SAPLKRKETSDKTSKAAAANKKTKAGGKKK) form a disordered region. The span at 355–364 (KRKETSDKTS) shows a compositional bias: basic and acidic residues. Residues 371 to 380 (KKTKAGGKKK) show a composition bias toward basic residues.

Belongs to the XPG/RAD2 endonuclease family. FEN1 subfamily. In terms of assembly, interacts with PCNA. Three molecules of FEN1 bind to one PCNA trimer with each molecule binding to one PCNA monomer. PCNA stimulates the nuclease activity without altering cleavage specificity. Mg(2+) serves as cofactor. Post-translationally, phosphorylated. Phosphorylation upon DNA damage induces relocalization to the nuclear plasma.

It localises to the nucleus. Its subcellular location is the nucleolus. The protein resides in the nucleoplasm. The protein localises to the mitochondrion. In terms of biological role, structure-specific nuclease with 5'-flap endonuclease and 5'-3' exonuclease activities involved in DNA replication and repair. During DNA replication, cleaves the 5'-overhanging flap structure that is generated by displacement synthesis when DNA polymerase encounters the 5'-end of a downstream Okazaki fragment. It enters the flap from the 5'-end and then tracks to cleave the flap base, leaving a nick for ligation. Also involved in the long patch base excision repair (LP-BER) pathway, by cleaving within the apurinic/apyrimidinic (AP) site-terminated flap. Acts as a genome stabilization factor that prevents flaps from equilibrating into structures that lead to duplications and deletions. Also possesses 5'-3' exonuclease activity on nicked or gapped double-stranded DNA, and exhibits RNase H activity. Also involved in replication and repair of rDNA and in repairing mitochondrial DNA. The sequence is that of Flap endonuclease 1-A from Sorghum bicolor (Sorghum).